Here is a 534-residue protein sequence, read N- to C-terminus: Arginine transporter 1 (534 aa).

Transmembrane regions (helical) follow at residues 35–55 (YVLL…YFGW), 99–119 (SLFT…GYLL), 126–146 (AVAL…AFSG), 154–174 (PAFV…LLIV), 182–202 (ALIM…PLVL), and 216–236 (VCIG…FFFI). Asparagine 246 carries N-linked (GlcNAc...) asparagine glycosylation. Positions 261 to 302 (TAQSSPKAVDSPPCDEGASSRGRLAVSHNTERTAPDDEQEKD) are disordered. Basic and acidic residues predominate over residues 289–302 (NTERTAPDDEQEKD). A run of 6 helical transmembrane segments spans residues 329–349 (AFTF…WVMA), 365–385 (YTLE…GVVI), 388–408 (IGIM…YVCV), 419–439 (FSVI…YVFV), 451–471 (LIGV…VLYG), and 483–503 (RPVV…LLAM).

Belongs to the SLC43A transporter (TC 2.A.1.44) family.

The protein resides in the cell membrane. It catalyses the reaction L-arginine(in) = L-arginine(out). Selective L-arginine transporter that is essential for parasite survival and virulence. Does not require other inorganic ions such as sodium, chloride, potassium or calcium. This chain is Arginine transporter 1, found in Toxoplasma gondii (strain ATCC 50611 / Me49).